Reading from the N-terminus, the 376-residue chain is Protein FhaE (376 aa).

An N-terminal signal peptide occupies residues 1-37 (MSQIFADRRAAVPARVISFCGAALAVWAGLAVQPAMA).

This chain is Protein FhaE (fhaE), found in Bordetella pertussis (strain Tohama I / ATCC BAA-589 / NCTC 13251).